The chain runs to 807 residues: Ribosome biogenesis protein ERB1 (807 aa).

The segment at 1–112 is disordered; the sequence is MMAKNNKTTE…DTTSLTDRLS (112 aa). 2 stretches are compositionally biased toward acidic residues: residues 21 to 30 and 42 to 56; these read EESDVEEDED and EASESDEDDDEYESA. Position 23 is a phosphoserine (Ser23). The segment covering 57–69 has biased composition (basic and acidic residues); the sequence is VEEKESSSDKEAQ. Phosphoserine is present on residues Ser72 and Ser76. The segment covering 86–102 has biased composition (acidic residues); sequence EEEGDEEEDYDSSEFSD. Residue Lys127 forms a Glycyl lysine isopeptide (Lys-Gly) (interchain with G-Cter in ubiquitin) linkage. Residues Ser146 and Ser149 each carry the phosphoserine modification. The interval 265–383 is required for interaction with NOP7; that stretch reads RFVPSKNEAK…LRKVPGYGES (119 aa). The required for interaction with YTM1 stretch occupies residues 383–419; sequence SIRERFERSLDLYLAPRVRKNKLNIDPNSLIPELPSP. Position 418 is a phosphoserine (Ser418). 7 WD repeats span residues 435-474, 483-523, 592-634, 637-675, 678-717, 721-760, and 776-807; these read GHKGKVRTLSIDPSGLWLATGSDDGTVRVWEILTGREVYR, NPDD…YDIE, SCKK…TQSP, KSKGIIMDAKFHPFKPQLFVCSQRYVRIYDLSQQILVKK, PGARWLSKIDIHPRGDNLIASSFDKRVLWHDLDLASTPYK, YHEKAVRSVNFHKKLPLFSSAADDGTIHVFHATVYDDMMK, and INSLGVLDAIWHPREAWLFSAGADNTARLWTT.

It belongs to the WD repeat BOP1/ERB1 family. As to quaternary structure, component of the NOP7 complex, composed of ERB1, NOP7 and YTM1. The complex is held together by ERB1, which interacts with NOP7 via its N-terminal domain and with YTM1 via a high-affinity interaction between the seven-bladed beta-propeller domains of the 2 proteins. The NOP7 complex associates with the 66S pre-ribosome.

It localises to the nucleus. Its subcellular location is the nucleolus. The protein localises to the nucleoplasm. Functionally, component of the NOP7 complex, which is required for maturation of the 25S and 5.8S ribosomal RNAs and formation of the 60S ribosome. The chain is Ribosome biogenesis protein ERB1 from Saccharomyces cerevisiae (strain YJM789) (Baker's yeast).